The following is an 878-amino-acid chain: Aconitate hydratase A (878 aa).

Residues Cys-426, Cys-492, and Cys-495 each coordinate [4Fe-4S] cluster.

It belongs to the aconitase/IPM isomerase family. Monomer. [4Fe-4S] cluster is required as a cofactor.

It carries out the reaction citrate = D-threo-isocitrate. The enzyme catalyses (2S,3R)-3-hydroxybutane-1,2,3-tricarboxylate = 2-methyl-cis-aconitate + H2O. Its pathway is carbohydrate metabolism; tricarboxylic acid cycle; isocitrate from oxaloacetate: step 2/2. It functions in the pathway organic acid metabolism; propanoate degradation. Involved in the catabolism of short chain fatty acids (SCFA) via the tricarboxylic acid (TCA)(acetyl degradation route) and probably the 2-methylcitrate cycle I (propionate degradation route). Catalyzes the reversible isomerization of citrate to isocitrate via cis-aconitate. Could catalyze the hydration of 2-methyl-cis-aconitate to yield (2R,3S)-2-methylisocitrate. The apo form of AcnA functions as a RNA-binding regulatory protein. This is Aconitate hydratase A (acnA) from Rickettsia felis (strain ATCC VR-1525 / URRWXCal2) (Rickettsia azadi).